The sequence spans 770 residues: Probable copper-exporting P-type ATPase V (770 aa).

The 66-residue stretch at 1-66 (MRVCVTGFNV…AITKAQHVPA (66 aa)) folds into the HMA domain. The disordered stretch occupies residues 103 to 130 (DKPLKASRCGGRPRGPVRGSASWPGEQN). Residues 110–121 (RCGGRPRGPVRG) show a composition bias toward low complexity. 6 helical membrane-spanning segments follow: residues 141–161 (VWLA…FGAY), 164–184 (AGWL…WPIL), 193–213 (ALTS…FVYS), 217–237 (LFAG…FVVL), 377–397 (AVFV…WTLI), and 402–422 (VAGM…ALGL). The active-site 4-aspartylphosphate intermediate is Asp-460. Mg(2+) contacts are provided by Asp-660 and Asp-664. Transmembrane regions (helical) follow at residues 718-737 (LGWA…LGAL) and 741-760 (VAGA…SLRL).

It belongs to the cation transport ATPase (P-type) (TC 3.A.3) family. Type IB subfamily.

It localises to the cell membrane. It carries out the reaction Cu(+)(in) + ATP + H2O = Cu(+)(out) + ADP + phosphate + H(+). In terms of biological role, necessary for copper homeostasis and likely functions as a copper exporter. Also required for full virulence. The sequence is that of Probable copper-exporting P-type ATPase V (ctpV) from Mycobacterium tuberculosis (strain CDC 1551 / Oshkosh).